A 52-amino-acid polypeptide reads, in one-letter code: Large ribosomal subunit protein eL39 (52 aa).

Belongs to the eukaryotic ribosomal protein eL39 family.

In Desulfurococcus amylolyticus (strain DSM 18924 / JCM 16383 / VKM B-2413 / 1221n) (Desulfurococcus kamchatkensis), this protein is Large ribosomal subunit protein eL39.